We begin with the raw amino-acid sequence, 311 residues long: Probable manganese-dependent inorganic pyrophosphatase (311 aa).

The Mn(2+) site is built by H9, D13, D15, D77, H99, and D151.

This sequence belongs to the PPase class C family. Requires Mn(2+) as cofactor.

Its subcellular location is the cytoplasm. The catalysed reaction is diphosphate + H2O = 2 phosphate + H(+). This is Probable manganese-dependent inorganic pyrophosphatase from Streptococcus pyogenes serotype M1.